We begin with the raw amino-acid sequence, 261 residues long: Large ribosomal subunit protein uL3 (261 aa).

The span at 138–148 (SVSHRSHGSTG) shows a compositional bias: low complexity. 2 disordered regions span residues 138-163 (SVSH…KKMA) and 214-261 (ADAP…GDQA). The residue at position 151 (Q151) is an N5-methylglutamine. The segment covering 227-261 (APTPVEAAADEAAPAEEPAVTEAPAAEATEAGDQA) has biased composition (low complexity).

Belongs to the universal ribosomal protein uL3 family. Part of the 50S ribosomal subunit. Forms a cluster with proteins L14 and L19. Post-translationally, methylated by PrmB.

Its function is as follows. One of the primary rRNA binding proteins, it binds directly near the 3'-end of the 23S rRNA, where it nucleates assembly of the 50S subunit. The protein is Large ribosomal subunit protein uL3 of Phenylobacterium zucineum (strain HLK1).